Reading from the N-terminus, the 456-residue chain is Arginine biosynthesis bifunctional protein ArgJ, mitochondrial (456 aa).

Residues T184, K213, T224, E311, N451, and T456 each contribute to the substrate site. The active-site Nucleophile is the T224.

This sequence belongs to the ArgJ family. In terms of assembly, heterodimer of an alpha and a beta chain. The alpha and beta chains are autoproteolytically processed from a single precursor protein within the mitochondrion.

The protein resides in the mitochondrion matrix. It carries out the reaction N(2)-acetyl-L-ornithine + L-glutamate = N-acetyl-L-glutamate + L-ornithine. The enzyme catalyses L-glutamate + acetyl-CoA = N-acetyl-L-glutamate + CoA + H(+). It participates in amino-acid biosynthesis; L-arginine biosynthesis; L-ornithine and N-acetyl-L-glutamate from L-glutamate and N(2)-acetyl-L-ornithine (cyclic): step 1/1. It functions in the pathway amino-acid biosynthesis; L-arginine biosynthesis; N(2)-acetyl-L-ornithine from L-glutamate: step 1/4. In terms of biological role, catalyzes two activities which are involved in the cyclic version of arginine biosynthesis: the synthesis of acetylglutamate from glutamate and acetyl-CoA, and of ornithine by transacetylation between acetylornithine and glutamate. The sequence is that of Arginine biosynthesis bifunctional protein ArgJ, mitochondrial from Aspergillus oryzae (strain ATCC 42149 / RIB 40) (Yellow koji mold).